The following is a 302-amino-acid chain: MSVFIDKNTKVMVQGITGSTALFHTKQMLDYGTQIVAGVTPGKGGQVVEGVPVYNTVEEAKNETGANVSVVYVPAPFAADSIIEAADADLDMVICITEHIPVVDMVKVKRYLQGRKTRLVGPNCPGVITADECKIGIMPGYIHKKGHVGVVSRSGTLTYEAVHQLTEEGIGQTTAVGIGGDPVNGTNFIDVLKAFNEDSETKAVVMIGEIGGTAEEEAAQWIKENMNKPVVGFIGGQTAPPGKRMGHAGAIISGGKGTASEKIKTLNDCGVETADTPSEIGTTLIDAAKKAGIYEELLTIKK.

Residues 17–20 (TGST), lysine 43, and 96–98 (ITE) each bind CoA. Tyrosine 159 serves as a coordination point for substrate. The Tele-phosphohistidine intermediate role is filled by histidine 247.

It belongs to the succinate/malate CoA ligase alpha subunit family. In terms of assembly, heterotetramer of two alpha and two beta subunits.

It carries out the reaction succinate + ATP + CoA = succinyl-CoA + ADP + phosphate. It catalyses the reaction GTP + succinate + CoA = succinyl-CoA + GDP + phosphate. Its pathway is carbohydrate metabolism; tricarboxylic acid cycle; succinate from succinyl-CoA (ligase route): step 1/1. Succinyl-CoA synthetase functions in the citric acid cycle (TCA), coupling the hydrolysis of succinyl-CoA to the synthesis of either ATP or GTP and thus represents the only step of substrate-level phosphorylation in the TCA. The alpha subunit of the enzyme binds the substrates coenzyme A and phosphate, while succinate binding and nucleotide specificity is provided by the beta subunit. This Staphylococcus epidermidis (strain ATCC 35984 / DSM 28319 / BCRC 17069 / CCUG 31568 / BM 3577 / RP62A) protein is Succinate--CoA ligase [ADP-forming] subunit alpha.